Consider the following 91-residue polypeptide: Small integral membrane protein 12-B (91 aa).

The helical transmembrane segment at 12–34 (YAPYITFPVAFVVGAVGYQLEWF) threads the bilayer.

Belongs to the SMIM12 family.

It is found in the membrane. The chain is Small integral membrane protein 12-B (smim12-b) from Xenopus laevis (African clawed frog).